Consider the following 377-residue polypeptide: Probable isocitrate dehydrogenase [NAD] subunit alpha, mitochondrial (377 aa).

4 residues coordinate substrate: Arg131, Arg141, Arg162, and Asp249. The Mg(2+) site is built by Asp249, Asp273, and Asp277.

The protein belongs to the isocitrate and isopropylmalate dehydrogenases family. In terms of assembly, heterooligomer of subunits alpha, beta, and gamma in the apparent ratio of 2:1:1. Requires Mg(2+) as cofactor. Mn(2+) is required as a cofactor.

It is found in the mitochondrion. It carries out the reaction D-threo-isocitrate + NAD(+) = 2-oxoglutarate + CO2 + NADH. Functionally, probable catalytic subunit of the enzyme which catalyzes the decarboxylation of isocitrate (ICT) into alpha-ketoglutarate. The protein is Probable isocitrate dehydrogenase [NAD] subunit alpha, mitochondrial of Drosophila melanogaster (Fruit fly).